Consider the following 349-residue polypeptide: MQTTYLSMGSNIGDRQYYLHEAIRLLGKHPKIMIEKVSNFYESTPVGGVKQDDFTNLALKVATLLEPLELLSFIHEVELSLNRERKIHWGPRTIDIDIIFYDDLEMQVENLVIPHKEAFNRLFVLKPIFELIDKDFKYYASIEKAIAELSVSEQELHVIKEEKTPRNRIEDAVKEILFAVGENPNREGLLETPARVAKMYEEILSSQRLSKFNEYKLFEIDSSKTDSIVLIKDIPFYSMCEHHMLPFFGKAHVAYIPADGKIIGLSKIPRLVDYVSRKLSVQENITHDIGDILTDILNPKGVAVLVEGRHMCVEMRGVKKVNSITKTSYFLGEFKENNEKRMEFLESLL.

Residues 1-226 (MQTTYLSMGS…LFEIDSSKTD (226 aa)) form a 2-amino-4-hydroxy-6-hydroxymethyldihydropteridine pyrophosphokinase region. Residues 226 to 349 (DSIVLIKDIP…KRMEFLESLL (124 aa)) are GTP cyclohydrolase 1.

This sequence in the N-terminal section; belongs to the HPPK family. The protein in the C-terminal section; belongs to the GTP cyclohydrolase I family. Homomer.

The catalysed reaction is 6-hydroxymethyl-7,8-dihydropterin + ATP = (7,8-dihydropterin-6-yl)methyl diphosphate + AMP + H(+). It catalyses the reaction GTP + H2O = 7,8-dihydroneopterin 3'-triphosphate + formate + H(+). The protein operates within cofactor biosynthesis; 7,8-dihydroneopterin triphosphate biosynthesis; 7,8-dihydroneopterin triphosphate from GTP: step 1/1. It functions in the pathway cofactor biosynthesis; tetrahydrofolate biosynthesis; 2-amino-4-hydroxy-6-hydroxymethyl-7,8-dihydropteridine diphosphate from 7,8-dihydroneopterin triphosphate: step 4/4. This chain is Bifunctional protein FolKE (folKE), found in Lactococcus lactis subsp. lactis (strain IL1403) (Streptococcus lactis).